Reading from the N-terminus, the 396-residue chain is Phosphoglycerate kinase (396 aa).

Substrate-binding positions include 21 to 23 (DFN), Arg36, 59 to 62 (HFDR), Arg118, and Arg151. Residues Lys201, Glu323, and 353–356 (GGDT) each bind ATP.

This sequence belongs to the phosphoglycerate kinase family. In terms of assembly, monomer.

It localises to the cytoplasm. It carries out the reaction (2R)-3-phosphoglycerate + ATP = (2R)-3-phospho-glyceroyl phosphate + ADP. The protein operates within carbohydrate degradation; glycolysis; pyruvate from D-glyceraldehyde 3-phosphate: step 2/5. In Caulobacter vibrioides (strain ATCC 19089 / CIP 103742 / CB 15) (Caulobacter crescentus), this protein is Phosphoglycerate kinase.